A 339-amino-acid chain; its full sequence is Anthranilate phosphoribosyltransferase (339 aa).

Residues Gly-81, 84 to 85, Thr-89, 91 to 94, 109 to 117, and Ala-121 each bind 5-phospho-alpha-D-ribose 1-diphosphate; these read GD, NIST, and KHGNRNLSS. Gly-81 lines the anthranilate pocket. Ser-93 contacts Mg(2+). Asn-112 serves as a coordination point for anthranilate. An anthranilate-binding site is contributed by Arg-167. Positions 226 and 227 each coordinate Mg(2+).

It belongs to the anthranilate phosphoribosyltransferase family. As to quaternary structure, homodimer. Requires Mg(2+) as cofactor.

It catalyses the reaction N-(5-phospho-beta-D-ribosyl)anthranilate + diphosphate = 5-phospho-alpha-D-ribose 1-diphosphate + anthranilate. Its pathway is amino-acid biosynthesis; L-tryptophan biosynthesis; L-tryptophan from chorismate: step 2/5. Functionally, catalyzes the transfer of the phosphoribosyl group of 5-phosphorylribose-1-pyrophosphate (PRPP) to anthranilate to yield N-(5'-phosphoribosyl)-anthranilate (PRA). The sequence is that of Anthranilate phosphoribosyltransferase from Roseobacter denitrificans (strain ATCC 33942 / OCh 114) (Erythrobacter sp. (strain OCh 114)).